The chain runs to 259 residues: Large ribosomal subunit protein uL4 (259 aa).

Positions 47–67 (WGTDPMAGKRTTAESFGSGRG) are disordered.

It belongs to the universal ribosomal protein uL4 family. In terms of assembly, part of the 50S ribosomal subunit.

Its function is as follows. One of the primary rRNA binding proteins, this protein initially binds near the 5'-end of the 23S rRNA. It is important during the early stages of 50S assembly. It makes multiple contacts with different domains of the 23S rRNA in the assembled 50S subunit and ribosome. Functionally, forms part of the polypeptide exit tunnel. The chain is Large ribosomal subunit protein uL4 from Methanosphaera stadtmanae (strain ATCC 43021 / DSM 3091 / JCM 11832 / MCB-3).